The primary structure comprises 346 residues: N-acetyl-gamma-glutamyl-phosphate reductase (346 aa).

Cysteine 149 is an active-site residue.

Belongs to the NAGSA dehydrogenase family. Type 1 subfamily.

Its subcellular location is the cytoplasm. It catalyses the reaction N-acetyl-L-glutamate 5-semialdehyde + phosphate + NADP(+) = N-acetyl-L-glutamyl 5-phosphate + NADPH + H(+). Its pathway is amino-acid biosynthesis; L-arginine biosynthesis; N(2)-acetyl-L-ornithine from L-glutamate: step 3/4. In terms of biological role, catalyzes the NADPH-dependent reduction of N-acetyl-5-glutamyl phosphate to yield N-acetyl-L-glutamate 5-semialdehyde. This Saccharophagus degradans (strain 2-40 / ATCC 43961 / DSM 17024) protein is N-acetyl-gamma-glutamyl-phosphate reductase.